The chain runs to 292 residues: Histamine N-methyltransferase (292 aa).

Residue glutamate 28 participates in substrate binding. S-adenosyl-L-methionine contacts are provided by glycine 60, glutamate 89, glutamine 94, serine 120, and isoleucine 142. Residue asparagine 283 coordinates substrate.

Belongs to the class I-like SAM-binding methyltransferase superfamily. HNMT family. In terms of assembly, monomer.

The protein localises to the cytoplasm. The enzyme catalyses histamine + S-adenosyl-L-methionine = N(tau)-methylhistamine + S-adenosyl-L-homocysteine + H(+). Functionally, inactivates histamine by N-methylation. Plays an important role in degrading histamine and in regulating the airway response to histamine. The sequence is that of Histamine N-methyltransferase (HNMT) from Homo sapiens (Human).